A 1036-amino-acid chain; its full sequence is Nitrogen catabolic enzyme regulatory protein (1036 aa).

Over residues 1 to 17 (MAASTTTPTATTRPFFT) the composition is skewed to low complexity. 7 disordered regions span residues 1–126 (MAAS…HTQS), 207–240 (TDRTHRFSESAPQKSTSGIARLRKSSEQTQSQGS), 256–298 (TPAG…QSQH), 318–351 (GYLPRHLRKTSIDETSKRNPNRKRPADFSPHVSA), 590–743 (SSQG…PTTC), 792–976 (RGSG…PTTQ), and 1000–1028 (GMPNGQAGQMMGASSSSGPGSGPSRTGAE). A compositionally biased stretch (basic and acidic residues) spans 23-34 (TEHDFRFPRRPG). Positions 45–56 (AAMSSSSANNNH) are enriched in low complexity. Repeat copies occupy residues 49–55 (SSSANNN), 87–92 (SSSNNN), and 105–110 (SSSNNN). Residues 49-110 (SSSANNNHNQ…INHQSSSNNN (62 aa)) form a 3 X approximate repeats region. The segment covering 100-114 (NINHQSSSNNNISKN) has biased composition (low complexity). Residues 652–661 (PRSQSQSFRQ) show a composition bias toward polar residues. The span at 703-714 (SSGLSSVPASRP) shows a compositional bias: low complexity. The segment covering 723–736 (QGSTTNLQGAAGNS) has biased composition (polar residues). Residues 743 to 767 (CTNCFTQTTPLWRRNPDGQPLCNAC) form a GATA-type zinc finger. The span at 802–827 (GTSTRSKKNASMSAAARKNSTLSITS) shows a compositional bias: polar residues. Low complexity-rich tracts occupy residues 828–861 (NANNQPPAQVATPPAQQQVRASSVNESESPASGP) and 868–899 (AGSTPTSYHGSTGSTSGAVGGKSVIPIASAPP). Over residues 927–961 (SAGSDQPVSAGAVSSSGMDVDSPANSTGSNETMPT) the composition is skewed to polar residues. A compositionally biased stretch (low complexity) spans 1000–1023 (GMPNGQAGQMMGASSSSGPGSGPS).

As to quaternary structure, interacts with nmr.

It localises to the nucleus. Functionally, major nitrogen regulatory protein. During conditions of nitrogen limitation it turns on the expression of genes for enzymes which are required for the use of a variety of secondary nitrogen sources, including nitrates, purines, amino acids, and proteins. This is Nitrogen catabolic enzyme regulatory protein (nit-2) from Neurospora crassa (strain ATCC 24698 / 74-OR23-1A / CBS 708.71 / DSM 1257 / FGSC 987).